A 330-amino-acid chain; its full sequence is Aspartate--ammonia ligase (330 aa).

It belongs to the class-II aminoacyl-tRNA synthetase family. AsnA subfamily.

It localises to the cytoplasm. It carries out the reaction L-aspartate + NH4(+) + ATP = L-asparagine + AMP + diphosphate + H(+). Its pathway is amino-acid biosynthesis; L-asparagine biosynthesis; L-asparagine from L-aspartate (ammonia route): step 1/1. In Streptococcus thermophilus (strain CNRZ 1066), this protein is Aspartate--ammonia ligase.